Reading from the N-terminus, the 379-residue chain is Transcription termination factor Rho (379 aa).

The region spanning 1-68 is the Rho RNA-BD domain; it reads MTDKYGFLRS…KRIFQINGRF (68 aa). ATP contacts are provided by residues 111–116, 123–128, and Arg-154; these read GKGQRG and KTGKTT.

This sequence belongs to the Rho family. Homohexamer. The homohexamer assembles into an open ring structure.

Functionally, facilitates transcription termination by a mechanism that involves Rho binding to the nascent RNA, activation of Rho's RNA-dependent ATPase activity, and release of the mRNA from the DNA template. In Karelsulcia muelleri (strain SMDSEM) (Sulcia muelleri), this protein is Transcription termination factor Rho.